A 184-amino-acid polypeptide reads, in one-letter code: Adenine phosphoribosyltransferase (184 aa).

It belongs to the purine/pyrimidine phosphoribosyltransferase family. In terms of assembly, homodimer.

It is found in the cytoplasm. The catalysed reaction is AMP + diphosphate = 5-phospho-alpha-D-ribose 1-diphosphate + adenine. It functions in the pathway purine metabolism; AMP biosynthesis via salvage pathway; AMP from adenine: step 1/1. In terms of biological role, catalyzes a salvage reaction resulting in the formation of AMP, that is energically less costly than de novo synthesis. The protein is Adenine phosphoribosyltransferase of Blochmanniella pennsylvanica (strain BPEN).